A 482-amino-acid polypeptide reads, in one-letter code: Ribulose bisphosphate carboxylase large chain (482 aa).

A propeptide spanning residues Met1 to Ser2 is cleaved from the precursor. Pro3 bears the N-acetylproline mark. Lys14 carries the N6,N6,N6-trimethyllysine modification. Substrate contacts are provided by Asn123 and Thr173. Residue Lys175 is the Proton acceptor of the active site. Residue Lys177 participates in substrate binding. Mg(2+) contacts are provided by Lys201, Asp203, and Glu204. Position 201 is an N6-carboxylysine (Lys201). The Proton acceptor role is filled by His294. The substrate site is built by Arg295, His327, and Ser379.

It belongs to the RuBisCO large chain family. Type I subfamily. Heterohexadecamer of 8 large chains and 8 small chains; disulfide-linked. The disulfide link is formed within the large subunit homodimers. It depends on Mg(2+) as a cofactor. Post-translationally, the disulfide bond which can form in the large chain dimeric partners within the hexadecamer appears to be associated with oxidative stress and protein turnover.

The protein localises to the plastid. It localises to the chloroplast. The catalysed reaction is 2 (2R)-3-phosphoglycerate + 2 H(+) = D-ribulose 1,5-bisphosphate + CO2 + H2O. It catalyses the reaction D-ribulose 1,5-bisphosphate + O2 = 2-phosphoglycolate + (2R)-3-phosphoglycerate + 2 H(+). Functionally, ruBisCO catalyzes two reactions: the carboxylation of D-ribulose 1,5-bisphosphate, the primary event in carbon dioxide fixation, as well as the oxidative fragmentation of the pentose substrate in the photorespiration process. Both reactions occur simultaneously and in competition at the same active site. This chain is Ribulose bisphosphate carboxylase large chain, found in Phytolacca americana (American pokeweed).